A 510-amino-acid chain; its full sequence is Dolichyl-P-Man:Man5GlcNAc2-PP-dolichol alpha-1,3-mannosyltransferase Alg3 (510 aa).

Over 1-43 (MAPPKAASHRPAVRRKKSGTLVDSILDKYLNVRFFKYLLLEPA) the chain is Cytoplasmic. Residues 44–64 (ALPIVGLFVLLAELVINVVVI) form a helical membrane-spanning segment. The Lumenal segment spans residues 65–97 (QRVPYTEIDWVAYMQECEGFLNGTTNYSLLRGD). Residues 98-118 (TGPLVYPAAFVYIYSALYYVT) form a helical membrane-spanning segment. Topologically, residues 119–125 (SHGTNVR) are cytoplasmic. A helical transmembrane segment spans residues 126-146 (LAQYIFAGIYLLQLALVLRLY). Over 147 to 171 (SKSRKVPPYVLVLSAFTSYRIHSIY) the chain is Lumenal. The chain crosses the membrane as a helical span at residues 172–192 (VLRLFNDPVAVLLLYAALNLF). Over 193-211 (LDRRWTLGSTFFSLAVGVK) the chain is Cytoplasmic. A helical membrane pass occupies residues 212-232 (MNILLFAPALLLFYLANLGLL). Position 233 (Arg-233) is a topological domain, lumenal. Residues 234-254 (TILQLAVCGVIQLLLGAPFLL) form a helical membrane-spanning segment. Residues 255-294 (THPVEYLRGSFDLGRIFEHKWTVNYRFLSRDVFENRTFHV) lie on the Cytoplasmic side of the membrane. A helical transmembrane segment spans residues 295 to 315 (SLLGLHLLLLLAFAKPIWTFF). At 316–403 (QSYVRLRRIE…YGIHFDRCTQ (88 aa)) the chain is on the lumenal side. A disordered region spans residues 337 to 358 (LQLKAQKRPKKVEKDKDKDQKK). Positions 348 to 358 (VEKDKDKDQKK) are enriched in basic and acidic residues. Residues 404-424 (LALLPFFLCNLVGVACSRSLH) traverse the membrane as a helical segment. Residues 425–426 (YQ) are Cytoplasmic-facing. A helical transmembrane segment spans residues 427–447 (FYVWYFHSLPYLAWSTPYSLG). At 448–464 (VRCLILGLIEYCWNTYP) the chain is on the lumenal side. A helical transmembrane segment spans residues 465–485 (STNFSSAALHFTHIILLAGVA). Residues 486–510 (KQLIQTMRINNAAKREQQEQQKKLQ) lie on the Cytoplasmic side of the membrane.

Belongs to the glycosyltransferase ALG3 family.

The protein localises to the endoplasmic reticulum membrane. It catalyses the reaction an alpha-D-Man-(1-&gt;2)-alpha-D-Man-(1-&gt;2)-alpha-D-Man-(1-&gt;3)-[alpha-D-Man-(1-&gt;6)]-beta-D-Man-(1-&gt;4)-beta-D-GlcNAc-(1-&gt;4)-alpha-D-GlcNAc-diphospho-di-trans,poly-cis-dolichol + a di-trans,poly-cis-dolichyl beta-D-mannosyl phosphate = an alpha-D-Man-(1-&gt;2)-alpha-D-Man-(1-&gt;2)-alpha-D-Man-(1-&gt;3)-[alpha-D-Man-(1-&gt;3)-alpha-D-Man-(1-&gt;6)]-beta-D-Man-(1-&gt;4)-beta-D-GlcNAc-(1-&gt;4)-alpha-D-GlcNAc-diphospho-di-trans,poly-cis-dolichol + a di-trans,poly-cis-dolichyl phosphate + H(+). It functions in the pathway protein modification; protein glycosylation. Probable alpha-1,3-mannosyltransferase involved in the N-glycosylation pathway. Involved in glycosylation of the TNF receptor grnd, regulating its ligand affinity. Required for normal epithelial growth and architecture. Suppressor of JNK-dependent intestinal stem cell proliferation. This chain is Dolichyl-P-Man:Man5GlcNAc2-PP-dolichol alpha-1,3-mannosyltransferase Alg3, found in Drosophila melanogaster (Fruit fly).